The following is a 605-amino-acid chain: NADH-ubiquinone oxidoreductase chain 5 (605 aa).

Transmembrane regions (helical) follow at residues 11–31 (ILITELLILALSALMTMLPPI), 49–69 (LSLTSILIHILIEEPSSISSL), 77–97 (LAMSIKIDYYSLIFISIALFI), 120–140 (MFLLLFLMSMIMFIAANNFFP), 141–161 (MLVGWGTMGLMSYLLISWWHG), 178–198 (LADIGFILTFSWCITYMSSLD), 202–222 (FFATSTLVTGVPILGMLMAAM), 244–264 (VSALLHSSTMVTAGVYLLIGM), 273–295 (GFSEACLTMGAATALYASFKALL), 302–322 (IIAFSTLSQLGFMMATVGLNH), 325–345 (LAFMHLCMHAFFKAMMFLCAG), 371–391 (ASCFTLSTLALAGFPFLTGFF), 408–425 (LWATMLLISTMFTAIYSL), 457–477 (LALASIVTGSLFSLFTPPIYT), 488–508 (LAALTLTFMSAFLAMYLISLA), and 584–604 (IKTYFMAFLVTFVIILYIMLF).

It belongs to the complex I subunit 5 family.

The protein resides in the mitochondrion inner membrane. It carries out the reaction a ubiquinone + NADH + 5 H(+)(in) = a ubiquinol + NAD(+) + 4 H(+)(out). Core subunit of the mitochondrial membrane respiratory chain NADH dehydrogenase (Complex I) that is believed to belong to the minimal assembly required for catalysis. Complex I functions in the transfer of electrons from NADH to the respiratory chain. The immediate electron acceptor for the enzyme is believed to be ubiquinone. The chain is NADH-ubiquinone oxidoreductase chain 5 (MT-ND5) from Pelomedusa subrufa (African side-necked turtle).